Consider the following 611-residue polypeptide: Threonine--tRNA ligase (611 aa).

The disordered stretch occupies residues 1–25 (MAGPDRKPVSSAAATTPAPSAPVVL). Residues 9 to 24 (VSSAAATTPAPSAPVV) show a composition bias toward low complexity. Residues 209–502 (DHRRIGKDLD…MTENYAGDYP (294 aa)) are catalytic. Zn(2+) is bound by residues C302, H353, and H479.

This sequence belongs to the class-II aminoacyl-tRNA synthetase family. As to quaternary structure, homodimer. Zn(2+) serves as cofactor.

Its subcellular location is the cytoplasm. It carries out the reaction tRNA(Thr) + L-threonine + ATP = L-threonyl-tRNA(Thr) + AMP + diphosphate + H(+). In terms of biological role, catalyzes the attachment of threonine to tRNA(Thr) in a two-step reaction: L-threonine is first activated by ATP to form Thr-AMP and then transferred to the acceptor end of tRNA(Thr). Also edits incorrectly charged L-seryl-tRNA(Thr). The sequence is that of Threonine--tRNA ligase from Parasynechococcus marenigrum (strain WH8102).